The following is a 175-amino-acid chain: MIDDDGYRPNVGIVICNLDGQVLWARRYGQHSWQFPQGGINAGETAEQAMYRELFEEVGLSRKDVRILASTRNWLRYKLPKRLVRWDTKPVCIGQKQKWFLLQLLCPDADINMQRGGIPEFDGWRWVSFWYPVRQVVSFKRDVYRRVMKEFSGVVMPLQETAAQRSASAHRRKRG.

The region spanning 6-149 (GYRPNVGIVI…KRDVYRRVMK (144 aa)) is the Nudix hydrolase domain. Positions 38 to 59 (GGINAGETAEQAMYRELFEEVG) match the Nudix box motif.

This sequence belongs to the Nudix hydrolase family. RppH subfamily. It depends on a divalent metal cation as a cofactor.

In terms of biological role, accelerates the degradation of transcripts by removing pyrophosphate from the 5'-end of triphosphorylated RNA, leading to a more labile monophosphorylated state that can stimulate subsequent ribonuclease cleavage. The polypeptide is RNA pyrophosphohydrolase (Sodalis glossinidius (strain morsitans)).